Here is a 577-residue protein sequence, read N- to C-terminus: Vacuolar protein sorting-associated protein 45 (577 aa).

It belongs to the STXBP/unc-18/SEC1 family. Interacts with PEP7 and TLG2.

It localises to the cytoplasm. Its subcellular location is the vacuole membrane. Its function is as follows. Essential for vacuolar protein sorting. Function in membrane traffic between the Golgi and the vacuole. The chain is Vacuolar protein sorting-associated protein 45 (VPS45) from Saccharomyces cerevisiae (strain ATCC 204508 / S288c) (Baker's yeast).